A 334-amino-acid chain; its full sequence is MNAPHTHDTVADGAAIEATVADIADTGRRALTRREQKEAYENNKLFKRIVRQVGQAIGDYNMIEQGDKVMVCLSGGKDSYAMLDVLLRLRERAPIDFDIVAVNLDQKQPGFPEHVLPEYLTQIGVPFHIENQDTYSIVKRLVPEGKTTCSLCSRLRRGILYRVAGELGATKIALGHHRDDILQTLLLNMFYGGKLKGMPPKLQSDDGRNVVIRPLAYVKETDLEKFAELREFPIIPCNLCGSQPNLKRAEMKALIRDWDKRFPGRVDNMFSALANVVPSHLMDTTQFPFASLRATGQADPQGDIAFDEEPCASGDDTATRDGARPISIVQFDDL.

Residues 74-79 carry the PP-loop motif motif; the sequence is SGGKDS. [4Fe-4S] cluster contacts are provided by Cys149, Cys152, and Cys240.

Belongs to the TtcA family. As to quaternary structure, homodimer. It depends on Mg(2+) as a cofactor. Requires [4Fe-4S] cluster as cofactor.

It is found in the cytoplasm. The enzyme catalyses cytidine(32) in tRNA + S-sulfanyl-L-cysteinyl-[cysteine desulfurase] + AH2 + ATP = 2-thiocytidine(32) in tRNA + L-cysteinyl-[cysteine desulfurase] + A + AMP + diphosphate + H(+). It functions in the pathway tRNA modification. Its function is as follows. Catalyzes the ATP-dependent 2-thiolation of cytidine in position 32 of tRNA, to form 2-thiocytidine (s(2)C32). The sulfur atoms are provided by the cysteine/cysteine desulfurase (IscS) system. In Burkholderia ambifaria (strain ATCC BAA-244 / DSM 16087 / CCUG 44356 / LMG 19182 / AMMD) (Burkholderia cepacia (strain AMMD)), this protein is tRNA-cytidine(32) 2-sulfurtransferase.